The following is an 89-amino-acid chain: Small ribosomal subunit protein uS17 (89 aa).

This sequence belongs to the universal ribosomal protein uS17 family. As to quaternary structure, part of the 30S ribosomal subunit.

In terms of biological role, one of the primary rRNA binding proteins, it binds specifically to the 5'-end of 16S ribosomal RNA. The sequence is that of Small ribosomal subunit protein uS17 from Bacteroides fragilis (strain ATCC 25285 / DSM 2151 / CCUG 4856 / JCM 11019 / LMG 10263 / NCTC 9343 / Onslow / VPI 2553 / EN-2).